A 116-amino-acid chain; its full sequence is MATNNGAGKARHKFHVKKGDTVQVISGKDKGKVGKVSEVLPTAGKVIVEGVNMQTKHVKPQGDQQGQTLRREAPIYSCKVMLYSDKKKQASRVGHTVTDAGKKVRVLKKTGEILDK.

A disordered region spans residues 1-21; that stretch reads MATNNGAGKARHKFHVKKGDT.

Belongs to the universal ribosomal protein uL24 family. In terms of assembly, part of the 50S ribosomal subunit.

Its function is as follows. One of two assembly initiator proteins, it binds directly to the 5'-end of the 23S rRNA, where it nucleates assembly of the 50S subunit. Functionally, one of the proteins that surrounds the polypeptide exit tunnel on the outside of the subunit. This is Large ribosomal subunit protein uL24 from Gloeobacter violaceus (strain ATCC 29082 / PCC 7421).